A 57-amino-acid chain; its full sequence is Large ribosomal subunit protein bL33 (57 aa).

It belongs to the bacterial ribosomal protein bL33 family.

The polypeptide is Large ribosomal subunit protein bL33 (Shewanella amazonensis (strain ATCC BAA-1098 / SB2B)).